Reading from the N-terminus, the 497-residue chain is Sorting nexin-4 (497 aa).

Residues 1–59 (MDQHDDFDSVSWRQDPESDISRPTTSGTDADESLEYNRDTNGKRRMSSVHEDPPQAGPL) form a disordered region. Residues 35-53 (EYNRDTNGKRRMSSVHEDP) are compositionally biased toward basic and acidic residues. The region spanning 72 to 194 (VLECRVDSPL…IFLESPDWNA (123 aa)) is the PX domain. A 1,2-diacyl-sn-glycero-3-phospho-(1D-myo-inositol-3-phosphate) is bound by residues Arg-115, Thr-117, Lys-141, and Arg-160. Coiled-coil stretches lie at residues 235–261 (RRFIEVKEKADKLDEDLNHVEKIVARV) and 397–432 (EQSRRERVRKLELRIDELTREVESAKTTSEMFDEEV).

This sequence belongs to the sorting nexin family.

The protein resides in the cytoplasm. It is found in the cytosol. The protein localises to the preautophagosomal structure membrane. Its subcellular location is the endosome membrane. Functionally, sorting nexin, involved in the separation or division of vacuoles throughout the entire life cycle of the cells. Involved in retrieval of late-Golgi SNAREs from post-Golgi endosomes to the trans-Golgi network, for cytoplasm to vacuole transport (Cvt), and autophagy of large cargos including mitophagy, pexophagy and glycophagy. The polypeptide is Sorting nexin-4 (snx4) (Aspergillus fumigatus (strain ATCC MYA-4609 / CBS 101355 / FGSC A1100 / Af293) (Neosartorya fumigata)).